Consider the following 397-residue polypeptide: Protein shisa-8 (397 aa).

The first 38 residues, Met1–Ala38, serve as a signal peptide directing secretion. At Gly39 to Ser138 the chain is on the extracellular side. Asn75 carries N-linked (GlcNAc...) asparagine glycosylation. Residues Thr117–Glu136 form a disordered region. The segment covering Arg123–Glu136 has biased composition (basic and acidic residues). A helical transmembrane segment spans residues His139–Ala159. Over Arg160–Val397 the chain is Cytoplasmic. 2 disordered regions span residues Leu182–Leu250 and Phe281–Pro303. Pro residues-rich tracts occupy residues Pro188–Gly197 and Pro288–Pro303.

Belongs to the shisa family. Interacts with AMPAR subunits GRIA1 and GRIA2.

It is found in the membrane. May regulate trafficking and current kinetics of AMPA-type glutamate receptor (AMPAR) at synapses. This is Protein shisa-8 from Homo sapiens (Human).